Consider the following 358-residue polypeptide: GTPase Obg (358 aa).

One can recognise an Obg domain in the interval 1–159; it reads MKFLDEAKVY…RWIWLRLKLI (159 aa). The region spanning 160–327 is the OBG-type G domain; it reads ADAGLVGLPN…VLRALVEVIG (168 aa). GTP is bound by residues 166-173, 191-195, 212-215, 279-282, and 308-310; these read GLPNAGKS, FTTLH, DIPG, NKID, and SGV. Positions 173 and 193 each coordinate Mg(2+). Residues 335-358 form a disordered region; the sequence is AKGADASAAQAMETPVARAKPWSP.

It belongs to the TRAFAC class OBG-HflX-like GTPase superfamily. OBG GTPase family. In terms of assembly, monomer. Mg(2+) serves as cofactor.

The protein localises to the cytoplasm. An essential GTPase which binds GTP, GDP and possibly (p)ppGpp with moderate affinity, with high nucleotide exchange rates and a fairly low GTP hydrolysis rate. Plays a role in control of the cell cycle, stress response, ribosome biogenesis and in those bacteria that undergo differentiation, in morphogenesis control. The sequence is that of GTPase Obg from Nitrobacter winogradskyi (strain ATCC 25391 / DSM 10237 / CIP 104748 / NCIMB 11846 / Nb-255).